Consider the following 526-residue polypeptide: ATP synthase subunit alpha (526 aa).

171-178 (GDRQTGKT) contacts ATP.

Belongs to the ATPase alpha/beta chains family. In terms of assembly, F-type ATPases have 2 components, CF(1) - the catalytic core - and CF(0) - the membrane proton channel. CF(1) has five subunits: alpha(3), beta(3), gamma(1), delta(1), epsilon(1). CF(0) has four main subunits: a(1), b(1), b'(1) and c(9-12).

It is found in the cell inner membrane. It catalyses the reaction ATP + H2O + 4 H(+)(in) = ADP + phosphate + 5 H(+)(out). Produces ATP from ADP in the presence of a proton gradient across the membrane. The alpha chain is a regulatory subunit. The protein is ATP synthase subunit alpha of Chlorobium phaeovibrioides (strain DSM 265 / 1930) (Prosthecochloris vibrioformis (strain DSM 265)).